The chain runs to 371 residues: Queuine tRNA-ribosyltransferase (371 aa).

Asp-90 acts as the Proton acceptor in catalysis. Substrate is bound by residues 90–94 (DSGGF), Asp-144, Gln-188, and Gly-215. Residues 246 to 252 (GVGTPED) form an RNA binding region. Asp-265 serves as the catalytic Nucleophile. The tract at residues 270 to 274 (TRNAR) is RNA binding; important for wobble base 34 recognition. Residues Cys-303, Cys-305, Cys-308, and His-334 each contribute to the Zn(2+) site.

It belongs to the queuine tRNA-ribosyltransferase family. Homodimer. Within each dimer, one monomer is responsible for RNA recognition and catalysis, while the other monomer binds to the replacement base PreQ1. The cofactor is Zn(2+).

It catalyses the reaction 7-aminomethyl-7-carbaguanine + guanosine(34) in tRNA = 7-aminomethyl-7-carbaguanosine(34) in tRNA + guanine. Its pathway is tRNA modification; tRNA-queuosine biosynthesis. Functionally, catalyzes the base-exchange of a guanine (G) residue with the queuine precursor 7-aminomethyl-7-deazaguanine (PreQ1) at position 34 (anticodon wobble position) in tRNAs with GU(N) anticodons (tRNA-Asp, -Asn, -His and -Tyr). Catalysis occurs through a double-displacement mechanism. The nucleophile active site attacks the C1' of nucleotide 34 to detach the guanine base from the RNA, forming a covalent enzyme-RNA intermediate. The proton acceptor active site deprotonates the incoming PreQ1, allowing a nucleophilic attack on the C1' of the ribose to form the product. After dissociation, two additional enzymatic reactions on the tRNA convert PreQ1 to queuine (Q), resulting in the hypermodified nucleoside queuosine (7-(((4,5-cis-dihydroxy-2-cyclopenten-1-yl)amino)methyl)-7-deazaguanosine). The chain is Queuine tRNA-ribosyltransferase from Neisseria gonorrhoeae (strain ATCC 700825 / FA 1090).